Here is a 126-residue protein sequence, read N- to C-terminus: MDKTLKFTDSHEWVRDNGDGTVTIGISEHAQEMLGDVVFVDLPDVEDEVEAGESFSLVESVKAASDIYSPVTGEVVEINEELEDSPELINEEPYEGGWIVKVKLSDPSELDDLKDAEEYLSSIEEE.

Residues 21–103 (TVTIGISEHA…YEGGWIVKVK (83 aa)) enclose the Lipoyl-binding domain. K62 is subject to N6-lipoyllysine.

Belongs to the GcvH family. As to quaternary structure, the glycine cleavage system is composed of four proteins: P, T, L and H. Requires (R)-lipoate as cofactor.

Functionally, the glycine cleavage system catalyzes the degradation of glycine. The H protein shuttles the methylamine group of glycine from the P protein to the T protein. The protein is Glycine cleavage system H protein of Vibrio parahaemolyticus serotype O3:K6 (strain RIMD 2210633).